The primary structure comprises 180 residues: Large ribosomal subunit protein uL5 (180 aa).

Belongs to the universal ribosomal protein uL5 family. In terms of assembly, part of the 50S ribosomal subunit; part of the 5S rRNA/L5/L18/L25 subcomplex. Contacts the 5S rRNA and the P site tRNA. Forms a bridge to the 30S subunit in the 70S ribosome.

This is one of the proteins that bind and probably mediate the attachment of the 5S RNA into the large ribosomal subunit, where it forms part of the central protuberance. In the 70S ribosome it contacts protein S13 of the 30S subunit (bridge B1b), connecting the 2 subunits; this bridge is implicated in subunit movement. Contacts the P site tRNA; the 5S rRNA and some of its associated proteins might help stabilize positioning of ribosome-bound tRNAs. In Brevibacillus brevis (strain 47 / JCM 6285 / NBRC 100599), this protein is Large ribosomal subunit protein uL5.